The primary structure comprises 488 residues: Glutamyl-tRNA(Gln) amidotransferase subunit A (488 aa).

Residues lysine 77 and serine 152 each act as charge relay system in the active site. Serine 176 (acyl-ester intermediate) is an active-site residue.

Belongs to the amidase family. GatA subfamily. As to quaternary structure, heterotrimer of A, B and C subunits.

It catalyses the reaction L-glutamyl-tRNA(Gln) + L-glutamine + ATP + H2O = L-glutaminyl-tRNA(Gln) + L-glutamate + ADP + phosphate + H(+). In terms of biological role, allows the formation of correctly charged Gln-tRNA(Gln) through the transamidation of misacylated Glu-tRNA(Gln) in organisms which lack glutaminyl-tRNA synthetase. The reaction takes place in the presence of glutamine and ATP through an activated gamma-phospho-Glu-tRNA(Gln). This chain is Glutamyl-tRNA(Gln) amidotransferase subunit A, found in Streptococcus agalactiae serotype Ia (strain ATCC 27591 / A909 / CDC SS700).